Reading from the N-terminus, the 49-residue chain is SCAGSCKCKNCRCRSCRKSCCSCCPAGCNNCAKGCVCKEPASSKCSCCH.

Positions 1–16 (SCAGSCKCKNCRCRSC) are beta. 17 residues coordinate a divalent metal cation: Cys2, Cys6, Cys8, Cys11, Cys13, Cys16, Cys20, Cys21, Cys23, Cys24, Cys28, Cys31, Cys35, Cys37, Cys45, Cys47, and Cys48. Residues 17–49 (RKSCCSCCPAGCNNCAKGCVCKEPASSKCSCCH) are alpha.

Belongs to the metallothionein superfamily. Type 1 family.

Metallothioneins have a high content of cysteine residues that bind various heavy metals. This Phasianus colchicus colchicus (Black-necked pheasant) protein is Metallothionein.